We begin with the raw amino-acid sequence, 299 residues long: MALLIITTILWAFSFSLFGEYLAGHVDSYFAVLIRVGLAALVFLPFLRTRGHNLKTISLYMLVGAMQLGIMYMLSFHAYLYLTVSELLLFTVLTPLYITLIYDVMSQRRLRWGYAFSALLAVIGAGIIRYDRVTDHFWVGLLLVQLSNISFAIGMVGYKRLMETRPMPQHNAFAWFYLGAFLVAAVAWSLLGNAQKLPETTLQWSILVFLGVVASGIGYFMWNYGATQVDAGTLGIMNNMHVPAGLLVNLAIWHQQPHWPSFITGAAVILASLWVHRKWVAPRSAQTADDRRRDPASSE.

Transmembrane regions (helical) follow at residues 2–22 (ALLI…GEYL), 26–46 (VDSY…FLPF), 56–76 (TISL…MLSF), 81–101 (YLTV…ITLI), 110–130 (LRWG…IIRY), 137–157 (FWVG…GMVG), 172–192 (AFAW…SLLG), 202–222 (LQWS…YFMW), 233–253 (TLGI…LAIW), and 256–276 (QPHW…LWVH). EamA domains lie at 3–128 (LLII…AGII) and 139–274 (VGLL…ASLW).

Belongs to the drug/metabolite transporter (DMT) superfamily. 10 TMS drug/metabolite exporter (DME) (TC 2.A.7.3) family.

It is found in the cell inner membrane. It catalyses the reaction biotin(in) = biotin(out). In terms of biological role, uptake of biotin. This chain is Biotin transporter, found in Salmonella typhi.